The primary structure comprises 135 residues: T-cell receptor gamma chain V region V108A (135 aa).

The N-terminal stretch at 1–18 (MLLLRWFTSCCLWVFGLG) is a signal peptide. Positions 19–116 (QLEQTELSVT…EATYYCAVWM (98 aa)) are v segment. Residues 117 to 135 (RWSSGFHKVFAEGTKLIVI) are j segment.

This is T-cell receptor gamma chain V region V108A from Mus musculus (Mouse).